We begin with the raw amino-acid sequence, 574 residues long: NEDD4-binding protein 2-like 2 (574 aa).

4 disordered regions span residues 82-110 (HKEM…LAPA), 127-161 (YKPP…QKFN), 182-204 (ENEN…QTLS), and 542-574 (TQKS…TDDY). Composition is skewed to basic and acidic residues over residues 129-141 (PPEK…RKNE) and 149-161 (DSKR…QKFN). A coiled-coil region spans residues 162-196 (SKKLEIDTELSQFYKEIEELENENEASQGSCKEPE). Positions 563–574 (GSHSQVSITDDY) are enriched in polar residues.

The chain is NEDD4-binding protein 2-like 2 (N4bp2l2) from Rattus norvegicus (Rat).